Reading from the N-terminus, the 427-residue chain is Cyclic 2,3-diphosphoglycerate synthetase (427 aa).

It belongs to the cyclic 2,3-diphosphoglycerate synthetase family.

The protein localises to the cytoplasm. It carries out the reaction (2R)-2,3-bisphosphoglycerate + ATP + H(+) = cyclic (2R)-2,3-bisphosphoglycerate + ADP + phosphate. Functionally, catalyzes the formation of cyclic 2,3-diphosphoglycerate (cDPG) by formation of an intramolecular phosphoanhydride bond at the expense of ATP. The chain is Cyclic 2,3-diphosphoglycerate synthetase from Pyrococcus abyssi (strain GE5 / Orsay).